Reading from the N-terminus, the 293-residue chain is Ribulose bisphosphate carboxylase/oxygenase activase, chloroplastic (293 aa).

An ATP-binding site is contributed by 75-82 (PGTGKTTV).

The protein belongs to the CbxX/CfxQ family. Forms homooligomers. Forms heterohexameric rings with the nuclear-encoded Rca subunit consisting of 3 of each nuclear- and plastidial-encoded subunits that alternate in the ring.

It is found in the plastid. The protein localises to the chloroplast. Its function is as follows. Required for the expression of ribulose 1,5-bisphosphate carboxylase/oxygenase (RuBisCo). ATPase involved in the activation of red-type RuBisCo, which tends to form inactive complexes with its substrate ribulose 1,5-bisphosphate (RuBP). Catalyzes the release of RuBP from inhibited RuBisCo in an ATP-dependent manner. Activation of RuBisCO involves the ATP-dependent carboxylation of the epsilon-amino group of lysine leading to a carbamate structure. The nuclear-encoded subunit plays a more critical role in activase function than the plastidial-encoded subunit. This chain is Ribulose bisphosphate carboxylase/oxygenase activase, chloroplastic, found in Cyanidioschyzon merolae (strain NIES-3377 / 10D) (Unicellular red alga).